The chain runs to 452 residues: Protein phosphatase 1F (452 aa).

Residues 153–410 (LVSIHAIRNT…DNITVMVVFL (258 aa)) form the PPM-type phosphatase domain. Mn(2+)-binding residues include D195, G196, D357, and D401. At S452 the chain carries Phosphoserine.

It belongs to the PP2C family. In terms of assembly, associates with FEM1B. It depends on Mg(2+) as a cofactor. Mn(2+) is required as a cofactor. Expressed in the liver.

It catalyses the reaction O-phospho-L-seryl-[protein] + H2O = L-seryl-[protein] + phosphate. It carries out the reaction O-phospho-L-threonyl-[protein] + H2O = L-threonyl-[protein] + phosphate. In terms of biological role, dephosphorylates and concomitantly deactivates CaM-kinase II activated upon autophosphorylation, and CaM-kinases IV and I activated upon phosphorylation by CaM-kinase kinase. Promotes apoptosis. The protein is Protein phosphatase 1F (Ppm1f) of Mus musculus (Mouse).